Reading from the N-terminus, the 254-residue chain is Probable pectate lyase E (254 aa).

Residues 1–17 (MLQSLLLLPLFLTSAFA) form the signal peptide. Asparagine 175 is a glycosylation site (N-linked (GlcNAc...) asparagine). The segment at 228 to 254 (NNNGKEPKKKSSGPSKACEYNQPLKKC) is disordered.

Belongs to the polysaccharide lyase 3 family. Ca(2+) is required as a cofactor.

It is found in the secreted. It carries out the reaction Eliminative cleavage of (1-&gt;4)-alpha-D-galacturonan to give oligosaccharides with 4-deoxy-alpha-D-galact-4-enuronosyl groups at their non-reducing ends.. In terms of biological role, pectinolytic enzyme consist of four classes of enzymes: pectin lyase, polygalacturonase, pectin methylesterase and rhamnogalacturonase. Among pectinolytic enzymes, pectin lyase is the most important in depolymerization of pectin, since it cleaves internal glycosidic bonds of highly methylated pectins. Favors pectate, the anion, over pectin, the methyl ester. This is Probable pectate lyase E (plyE) from Aspergillus clavatus (strain ATCC 1007 / CBS 513.65 / DSM 816 / NCTC 3887 / NRRL 1 / QM 1276 / 107).